A 391-amino-acid chain; its full sequence is Lipid-A-disaccharide synthase (391 aa).

This sequence belongs to the LpxB family.

It catalyses the reaction a lipid X + a UDP-2-N,3-O-bis[(3R)-3-hydroxyacyl]-alpha-D-glucosamine = a lipid A disaccharide + UDP + H(+). It participates in bacterial outer membrane biogenesis; LPS lipid A biosynthesis. Functionally, condensation of UDP-2,3-diacylglucosamine and 2,3-diacylglucosamine-1-phosphate to form lipid A disaccharide, a precursor of lipid A, a phosphorylated glycolipid that anchors the lipopolysaccharide to the outer membrane of the cell. The chain is Lipid-A-disaccharide synthase from Azoarcus sp. (strain BH72).